Consider the following 90-residue polypeptide: RNA-binding protein Hfq (90 aa).

Residues 9 to 69 (DRFLNHLRVN…ISTIIPSSYV (61 aa)) form the Sm domain.

The protein belongs to the Hfq family. As to quaternary structure, homohexamer.

Its function is as follows. RNA chaperone that binds small regulatory RNA (sRNAs) and mRNAs to facilitate mRNA translational regulation in response to envelope stress, environmental stress and changes in metabolite concentrations. Also binds with high specificity to tRNAs. This is RNA-binding protein Hfq from Thermotoga petrophila (strain ATCC BAA-488 / DSM 13995 / JCM 10881 / RKU-1).